A 1651-amino-acid chain; its full sequence is MKFFIALALLGAALASTHLDRYNSIERNIQESSFRAGREYRYLFNGQLSAGLPVPSTPQGISRLQSQVTLQWTDGNTVRMQLQKTRFATSQQESNSMKMLPFERFEEVERMNREHQELLSMPVEFDYEHGLVREIRFAENDQPWSENIKRAVINMLQVNILKKEKYEGAEKSDNQEPTFSFTNVERTLEGECEVLYTVEEIKKEDEQRWAKSINFDKCTRRPYIHHVQTPVCKDCQQTLEQDKMSSTVLNYNITGTSSSFLINSVELRSQHLFAPISEKHQLVSAFTLNTMELIYAGEKKTEIKQVRNEKTSELVYNQESEWAEQQWAQTGEEKYLRQLPQWTENKVEMIKKMFSLMAKQIEQGEAELEAAHTVARIVKVLRECNEEQLEQIYRHVAEHKDEKIAEQLRSIYFNTLALAGTRVTIQQFVDKVQSRKNIAPLKASVAIKTLVDMRYPSLAIAEDIARLCESDVSSSFPALRQSCWLTYGAIVNGVCGQTPRVFVQKNGVKMCPRDAKQRIVDKLVQQFESASTRYEKVLALKTLANAGLDLSVYPLEKIILNEQHETTIRTQAIESFRRLRTQMPTKIQRVLMPVYLNRQQPQHIRMSALHQIIYTQPEWSVLSQIGNQLRQERNQQVRAFTLSLLRSYANNESPCEQTFSSRVQSLLNNIPFSSQEIDRFESVYGKWSTYSRRHQSGFEANFASLFTTESVLPTEMMASIEGVLSGEWNQYFAQIGFTQKNMEKIIKKLLSNVQEKGLEQIVVRGKRASGSFQPTEFLSNLLEKLRITRRQSSEQDPHAFVYIRHRDMDYAFLPIDADSIPEVVRSMIQGGRLEIGDIERVLAQGIHFSASNAAFLYETVRRVPTPMGLPVQFTSKMPTISSIRGQVTFELEPKNGKSFDGLRLRVQAGPRVASTHVLSLRVICPIAEVGTKFLHQAVLNTPVDTEIRMNWEDKVVIRAIYNTPSEEKRIAMIQSRPVTFTRTVAPDARQYPEPIEMTYMLPAHKQLSQSLDREYPQIRVQGTLNRPTSVRIPQWIVDSNVEVYYKPNVEQYEAIFELNLYNNYKMEKNYEKVYKKHNGRRYLEAEPEYDEEEHREQITKKFEWLQNEKVYQHVAKFEIKPEVVKMEVEAVCNNDFHFCKTQIRGEELKATIQYVYPQTPRTVEELKEQKYRQLVVMGEMNYGENTIHININGQQSQEQKKFVKQIEQAPEHETLLEASRLDQYQTVVEYEFEPKPAQYFARYWNMVQAYLRTQYPWTSRIETREEPSRKNMIRATINVEPRQRLTVNMTIETPMETTVLERVELPFRLPTAQIHYQPRNSRYEQKPVMEKIAHHASKQANCVVKSTKINTFDQVAYRNQFTPCYSVLAKDCGSEKSEPRFVVLMKKINEKKEWKNVKVVYGENEIEMYKTEEGLICRVNGEEIEYQPESEIEKKQYNIIWLNKNTLKFDSDDVTVQFDGVNARIHLSALYRNQQCGLCGHYDNEKETEFYDAENQENTIPKFAKSYLYKDSKCNYEREMFEKEENFQRIEKNQEEEKDQEMNYEESRREQDDEPTEQVAIVERQHEICFTQKPVLRCQNGKSQESKKQKVTSVYCLPSSNSWARRQMREIRREPLAQWPEHKLRNLRDQPQMEERTVRVAVDQKCDKFDY.

The signal sequence occupies residues 1-15; it reads MKFFIALALLGAALA. In terms of domain architecture, Vitellogenin spans 34–716; the sequence is FRAGREYRYL…TTESVLPTEM (683 aa). 2 N-linked (GlcNAc...) asparagine glycosylation sites follow: N252 and N1288. A VWFD domain is found at 1340-1515; the sequence is ANCVVKSTKI…SYLYKDSKCN (176 aa). Disulfide bonds link C1342–C1479 and C1364–C1514. The segment at 1527-1556 is disordered; that stretch reads FQRIEKNQEEEKDQEMNYEESRREQDDEPT.

As to expression, synthesized in Caenorhabditis only by 32 cells building the intestine of adult hermaphroditic individuals; they are cotranslationally secreted into the body cavity and subsequently taken up by the gonad.

It is found in the secreted. Precursor of the egg-yolk proteins that are sources of nutrients during embryonic development. May play a role in cholesterol uptake. May be involved in thermotolerance. The chain is Vitellogenin-6 (vit-6) from Caenorhabditis elegans.